Consider the following 1138-residue polypeptide: Condensin-2 complex subunit G2 (1138 aa).

Phosphoserine is present on Ser30. The HEAT repeat unit spans residues 459–497; that stretch reads LLPTLRYSLHDNSEKVRVAFVDLLLKIKAVRAAKFWKIC. Residue Thr1114 is modified to Phosphothreonine.

In terms of assembly, component of the condensin-2 complex, which contains the SMC2 and SMC4 heterodimer, and 3 non SMC subunits that probably regulate the complex: NCAPH2, NCAPD3 and NCAPG2. As to expression, expressed in spleen, lung and testis as well as in hematopoietic cell lines.

It is found in the nucleus. Regulatory subunit of the condensin-2 complex, a complex which establishes mitotic chromosome architecture and is involved in physical rigidity of the chromatid axis. Is required for early embryonic development and is essential for viability and expansion of the inner cell mass (ICM) of the implanting blastocyst. In Mus musculus (Mouse), this protein is Condensin-2 complex subunit G2 (Ncapg2).